The following is a 127-amino-acid chain: Small ribosomal subunit protein uS13 (127 aa).

The segment at 92-127 is disordered; sequence HRQGLPVRGQRTRTNARTRRGRRLTVAGKKKAPSKK. The segment covering 101–127 has biased composition (basic residues); that stretch reads QRTRTNARTRRGRRLTVAGKKKAPSKK.

Belongs to the universal ribosomal protein uS13 family. As to quaternary structure, part of the 30S ribosomal subunit. Forms a loose heterodimer with protein S19. Forms two bridges to the 50S subunit in the 70S ribosome.

Its function is as follows. Located at the top of the head of the 30S subunit, it contacts several helices of the 16S rRNA. In the 70S ribosome it contacts the 23S rRNA (bridge B1a) and protein L5 of the 50S subunit (bridge B1b), connecting the 2 subunits; these bridges are implicated in subunit movement. Contacts the tRNAs in the A and P-sites. The sequence is that of Small ribosomal subunit protein uS13 from Gloeothece citriformis (strain PCC 7424) (Cyanothece sp. (strain PCC 7424)).